Reading from the N-terminus, the 588-residue chain is uncharacterized protein (588 aa).

A signal peptide spans 1–19; that stretch reads MRSTAYLTALLSFLGATHA. Asparagine 45 and asparagine 104 each carry an N-linked (GlcNAc...) asparagine glycan. The FAD-binding PCMH-type domain maps to 118 to 303; that stretch reads GQGRIPLYSA…TSVTLRTFKD (186 aa). At histidine 156 the chain carries Pros-8alpha-FAD histidine. N-linked (GlcNAc...) asparagine glycosylation is found at asparagine 179, asparagine 312, asparagine 320, asparagine 351, asparagine 370, and asparagine 446.

Belongs to the oxygen-dependent FAD-linked oxidoreductase family. Requires FAD as cofactor.

The protein resides in the secreted. This is an uncharacterized protein from Arthroderma benhamiae (strain ATCC MYA-4681 / CBS 112371) (Trichophyton mentagrophytes).